Consider the following 385-residue polypeptide: Selenoprotein P (385 aa).

A signal peptide spans 1–19; it reads MWRSLGLALALCLLPYGGA. Residue selenocysteine 59 is a non-standard amino acid, selenocysteine. The segment at residues 59–62 is a cross-link (cysteinyl-selenocysteine (Sec-Cys); in isoform Se-P1); it reads UYLC. N-linked (GlcNAc...) asparagine glycans are attached at residues asparagine 83, asparagine 174, and asparagine 188. 2 disulfide bridges follow: cysteine 168/cysteine 186 and cysteine 172/cysteine 175. The disordered stretch occupies residues 196-262; the sequence is KTTEPSEEHN…KGQHRQGHLE (67 aa). The segment covering 243 to 258 has biased composition (basic residues); it reads LHHHHHHHKHKGQHRQ. Selenocysteine 264 is a non-standard amino acid (selenocysteine). Residue serine 269 is modified to Phosphoserine. 4 non-standard amino acids (selenocysteine) are found at residues selenocysteine 282, selenocysteine 323, selenocysteine 335, and selenocysteine 357. The interval 357-385 is disordered; that stretch reads UHSQHVSPTEASPNUSUNNKTKKUKUNLN. Polar residues predominate over residues 360 to 369; that stretch reads QHVSPTEASP. O-linked (Hex...) threonine; partial glycosylation is present at threonine 365. 4 non-standard amino acids (selenocysteine) are found at residues selenocysteine 371, selenocysteine 373, selenocysteine 380, and selenocysteine 382. Over residues 376–385 the composition is skewed to basic residues; sequence KTKKUKUNLN.

The protein belongs to the selenoprotein P family. Post-translationally, isoform Se-P1 contains several disulfide bridges and a selenide-sulfide bond between Sec-59 and Cys-62. These bonds are speculated to serve as redox-active pairs. Phosphorylation sites are present in the extracellular medium. As to expression, widely expressed, mainly by the liver. Secreted in plasma.

It localises to the secreted. Its function is as follows. Might be responsible for some of the extracellular antioxidant defense properties of selenium or might be involved in the transport of selenium. May supply selenium to tissues such as brain and testis. The polypeptide is Selenoprotein P (Rattus norvegicus (Rat)).